The chain runs to 963 residues: Importin-13 (963 aa).

HEAT repeat units follow at residues 24 to 54 (ENVE…QAQA), 56 to 88 (PQAW…KISR), 95 to 135 (TDQY…LSMM), 142 to 179 (AVAD…EFQT), 194 to 231 (LAVE…SWVQ), 236 to 268 (LQDC…NAIS), 276 to 325 (VNTL…ALLD), 330 to 372 (WQSF…DDIL), 375 to 438 (EAEK…YEML), 440 to 476 (AELL…FQSI), 487 to 522 (VVPG…WLAD), 524 to 558 (PVMI…CREC), 562 to 600 (LPPY…LLSA), 603 to 648 (VEEI…SNLF), 676 to 716 (PVVV…VKTL), 720 to 754 (FAPM…VHIF), 761 to 803 (FPPI…ALKR), 815 to 845 (VKAV…TELL), 860 to 893 (EDGR…FALN), and 897 to 931 (FSLL…QQIL). One can recognise an Importin N-terminal domain in the interval 45–111 (AQKWLMQAQA…KAQLFTQITR (67 aa)).

This sequence belongs to the importin beta family. Interacts with UBC9, RAN, RBM8A, eIF-1A and PAX6.

The protein resides in the cytoplasm. It localises to the nucleus. In terms of biological role, functions in nuclear protein import as nuclear transport receptor. Serves as receptor for nuclear localization signals (NLS) in cargo substrates. Is thought to mediate docking of the importin/substrate complex to the nuclear pore complex (NPC) through binding to nucleoporin and the complex is subsequently translocated through the pore by an energy requiring, Ran-dependent mechanism. At the nucleoplasmic side of the NPC, Ran binds to the importin, the importin/substrate complex dissociates and importin is re-exported from the nucleus to the cytoplasm where GTP hydrolysis releases Ran. The directionality of nuclear import is thought to be conferred by an asymmetric distribution of the GTP- and GDP-bound forms of Ran between the cytoplasm and nucleus. Mediates the nuclear import of UBC9, the RBM8A/MAGOH complex, PAX6 and probably other members of the paired homeobox family. Also mediates nuclear export of eIF-1A, and the cytoplasmic release of eIF-1A is triggered by the loading of import substrates onto IPO13. The sequence is that of Importin-13 (IPO13) from Bos taurus (Bovine).